The sequence spans 106 residues: Large ribosomal subunit protein eL34 (106 aa).

This sequence belongs to the eukaryotic ribosomal protein eL34 family.

This is Large ribosomal subunit protein eL34 from Hyperthermus butylicus (strain DSM 5456 / JCM 9403 / PLM1-5).